The sequence spans 430 residues: Cell division protein FtsZ (430 aa).

GTP-binding positions include 76 to 80, 163 to 165, Glu-194, Arg-198, and Asp-242; these read GGGCN and GTG. The interval 374–418 is disordered; sequence KEKPQAKTSSKPVLSGPPAGVETVPSTTTPEDPLGEIPMAPELDI.

The protein belongs to the FtsZ family. In terms of assembly, homodimer. Polymerizes to form a dynamic ring structure in a strictly GTP-dependent manner. Interacts directly with several other division proteins.

Its subcellular location is the cytoplasm. Essential cell division protein that forms a contractile ring structure (Z ring) at the future cell division site. The regulation of the ring assembly controls the timing and the location of cell division. One of the functions of the FtsZ ring is to recruit other cell division proteins to the septum to produce a new cell wall between the dividing cells. Binds GTP and shows GTPase activity. The protein is Cell division protein FtsZ of Synechocystis sp. (strain ATCC 27184 / PCC 6803 / Kazusa).